The sequence spans 139 residues: Small ribosomal subunit protein uS12 (139 aa).

Positions 1–44 (MPTINQLVRKPRQSKITKSKSPALNKGYNSFKKSLTDVKSPQKR) are disordered. Basic residues predominate over residues 9–18 (RKPRQSKITK). Positions 19-39 (SKSPALNKGYNSFKKSLTDVK) are enriched in polar residues. D102 is subject to 3-methylthioaspartic acid.

This sequence belongs to the universal ribosomal protein uS12 family. In terms of assembly, part of the 30S ribosomal subunit. Contacts proteins S8 and S17. May interact with IF1 in the 30S initiation complex.

Functionally, with S4 and S5 plays an important role in translational accuracy. Interacts with and stabilizes bases of the 16S rRNA that are involved in tRNA selection in the A site and with the mRNA backbone. Located at the interface of the 30S and 50S subunits, it traverses the body of the 30S subunit contacting proteins on the other side and probably holding the rRNA structure together. The combined cluster of proteins S8, S12 and S17 appears to hold together the shoulder and platform of the 30S subunit. This Lysinibacillus sphaericus (strain C3-41) protein is Small ribosomal subunit protein uS12.